An 807-amino-acid polypeptide reads, in one-letter code: Phenylalanine--tRNA ligase beta subunit (807 aa).

One can recognise a tRNA-binding domain in the interval 39–156 (AGEFSGVVIG…SDAPLGQCVR (118 aa)). Residues 409–488 (PQTKDVNLRR…RIFGYNNIPN (80 aa)) form the B5 domain. Positions 466, 472, 475, and 476 each coordinate Mg(2+). One can recognise an FDX-ACB domain in the interval 713-806 (SRFPANRRDL…LKTELNASLR (94 aa)).

The protein belongs to the phenylalanyl-tRNA synthetase beta subunit family. Type 1 subfamily. Tetramer of two alpha and two beta subunits. Mg(2+) is required as a cofactor.

It localises to the cytoplasm. It catalyses the reaction tRNA(Phe) + L-phenylalanine + ATP = L-phenylalanyl-tRNA(Phe) + AMP + diphosphate + H(+). In Colwellia psychrerythraea (strain 34H / ATCC BAA-681) (Vibrio psychroerythus), this protein is Phenylalanine--tRNA ligase beta subunit.